The primary structure comprises 536 residues: 2-isopropylmalate synthase (536 aa).

One can recognise a Pyruvate carboxyltransferase domain in the interval 8 to 273 (VLIFDTTLRD…FFGRDPESPT (266 aa)). Positions 17, 208, 210, and 244 each coordinate Mn(2+). Residues 408–536 (QLQLVQVSCG…PQHDLIKANL (129 aa)) are regulatory domain.

It belongs to the alpha-IPM synthase/homocitrate synthase family. LeuA type 1 subfamily. Homodimer. Requires Mn(2+) as cofactor.

Its subcellular location is the cytoplasm. It catalyses the reaction 3-methyl-2-oxobutanoate + acetyl-CoA + H2O = (2S)-2-isopropylmalate + CoA + H(+). The protein operates within amino-acid biosynthesis; L-leucine biosynthesis; L-leucine from 3-methyl-2-oxobutanoate: step 1/4. Catalyzes the condensation of the acetyl group of acetyl-CoA with 3-methyl-2-oxobutanoate (2-ketoisovalerate) to form 3-carboxy-3-hydroxy-4-methylpentanoate (2-isopropylmalate). This is 2-isopropylmalate synthase from Prochlorococcus marinus (strain MIT 9211).